The sequence spans 860 residues: DNA primase (860 aa).

The segment at 804–842 (CLNRQHRGNRDNVLVYIQLKADGNRLILILWSTCFATKC) adopts a CHC2-type zinc-finger fold.

It belongs to the herpesviridae DNA primase family. As to quaternary structure, associates with the helicase and the primase-associated factor to form the helicase-primase factor.

The protein localises to the host nucleus. Functionally, essential component of the helicase/primase complex. Unwinds the DNA at the replication forks and generates single-stranded DNA for both leading and lagging strand synthesis. The primase initiates primer synthesis and thereby produces large amount of short RNA primers on the lagging strand that the polymerase elongates using dNTPs. This Homo sapiens (Human) protein is DNA primase (U43).